The following is a 325-amino-acid chain: NADH-quinone oxidoreductase subunit H (325 aa).

Helical transmembrane passes span 11 to 31, 50 to 69, 81 to 101, 114 to 134, 154 to 174, 186 to 206, 237 to 257, 265 to 285, and 304 to 324; these read ILLS…CGAF, NRVG…KMFF, VIFT…FAIV, IGIL…LFAG, VSYE…AGSF, LWNV…GVAV, FFVG…TLFF, LPPF…FILI, and VCLP…LWQA.

The protein belongs to the complex I subunit 1 family. In terms of assembly, NDH-1 is composed of 13 different subunits. Subunits NuoA, H, J, K, L, M, N constitute the membrane sector of the complex.

It is found in the cell inner membrane. It catalyses the reaction a quinone + NADH + 5 H(+)(in) = a quinol + NAD(+) + 4 H(+)(out). Its function is as follows. NDH-1 shuttles electrons from NADH, via FMN and iron-sulfur (Fe-S) centers, to quinones in the respiratory chain. The immediate electron acceptor for the enzyme in this species is believed to be ubiquinone. Couples the redox reaction to proton translocation (for every two electrons transferred, four hydrogen ions are translocated across the cytoplasmic membrane), and thus conserves the redox energy in a proton gradient. This subunit may bind ubiquinone. This chain is NADH-quinone oxidoreductase subunit H, found in Salmonella arizonae (strain ATCC BAA-731 / CDC346-86 / RSK2980).